The following is a 568-amino-acid chain: Putative U-box domain-containing protein 55 (568 aa).

Residues 217–464 (QSESDRNDQL…KVAAEKDAAS (248 aa)) adopt a coiled-coil conformation. The region spanning 496–568 (QPPSYFICPI…AIQEWLQRNS (73 aa)) is the U-box domain.

The catalysed reaction is S-ubiquitinyl-[E2 ubiquitin-conjugating enzyme]-L-cysteine + [acceptor protein]-L-lysine = [E2 ubiquitin-conjugating enzyme]-L-cysteine + N(6)-ubiquitinyl-[acceptor protein]-L-lysine.. Its pathway is protein modification; protein ubiquitination. Functions as an E3 ubiquitin ligase. This Arabidopsis thaliana (Mouse-ear cress) protein is Putative U-box domain-containing protein 55 (PUB55).